Consider the following 346-residue polypeptide: MAHRPRWTLSQVTELFEKPLLDLLFEAQQVHRQHFDPRQVQVSTLLSIKTGACPEDCKYCPQSSRYKTGLEAERLMEVEQVLESARKAKAAGSTRFCMGAAWKNPHERDMPYLEQMVQGVKAMGLEACMTLGTLSESQAQRLANAGLDYYNHNLDTSPEFYGNIITTRTYQERLDTLEKVRDAGIKVCSGGIVGLGETVKDRAGLLLQLANLPTPPESVPINMLVKVEGTPLADNDDVDAFDFIRTIAVARIMMPTSYVRLSAGREQMNEQTQAMCFMAGANSIFYGCKLLTTPNPEEDKDLQLFRKLGLNPQQTAVLAGDNEQQQRLEQALMTPDTDEYYNAAAL.

One can recognise a Radical SAM core domain in the interval 38 to 256 (RQVQVSTLLS…IAVARIMMPT (219 aa)). [4Fe-4S] cluster-binding residues include C53, C57, and C60. [2Fe-2S] cluster is bound by residues C97, C128, C188, and R260.

The protein belongs to the radical SAM superfamily. Biotin synthase family. Homodimer. [4Fe-4S] cluster is required as a cofactor. [2Fe-2S] cluster serves as cofactor.

The catalysed reaction is (4R,5S)-dethiobiotin + (sulfur carrier)-SH + 2 reduced [2Fe-2S]-[ferredoxin] + 2 S-adenosyl-L-methionine = (sulfur carrier)-H + biotin + 2 5'-deoxyadenosine + 2 L-methionine + 2 oxidized [2Fe-2S]-[ferredoxin]. Its pathway is cofactor biosynthesis; biotin biosynthesis; biotin from 7,8-diaminononanoate: step 2/2. Functionally, catalyzes the conversion of dethiobiotin (DTB) to biotin by the insertion of a sulfur atom into dethiobiotin via a radical-based mechanism. The polypeptide is Biotin synthase (Escherichia coli (strain SE11)).